A 143-amino-acid chain; its full sequence is Large ribosomal subunit protein uL16 (143 aa).

The span at 1–17 (MLQPKRTKFRKAHKGRI) shows a compositional bias: basic residues. Positions 1 to 20 (MLQPKRTKFRKAHKGRIHGN) are disordered.

It belongs to the universal ribosomal protein uL16 family. In terms of assembly, part of the 50S ribosomal subunit.

In terms of biological role, binds 23S rRNA and is also seen to make contacts with the A and possibly P site tRNAs. The chain is Large ribosomal subunit protein uL16 from Zymomonas mobilis subsp. mobilis (strain ATCC 31821 / ZM4 / CP4).